Consider the following 116-residue polypeptide: Large ribosomal subunit protein bL20 (116 aa).

The protein belongs to the bacterial ribosomal protein bL20 family.

Binds directly to 23S ribosomal RNA and is necessary for the in vitro assembly process of the 50S ribosomal subunit. It is not involved in the protein synthesizing functions of that subunit. The sequence is that of Large ribosomal subunit protein bL20 from Desulfatibacillum aliphaticivorans.